Here is a 412-residue protein sequence, read N- to C-terminus: Poly-beta-1,6-N-acetyl-D-glucosamine synthase (412 aa).

4 consecutive transmembrane segments (helical) span residues 6 to 26 (FLLF…IYFY), 298 to 318 (IISI…FITA), 332 to 352 (IFLL…TVAL), and 366 to 386 (LIFV…VVLV).

It belongs to the glycosyltransferase 2 family.

The protein resides in the cell membrane. N-acetylglucosaminyltransferase that catalyzes the polymerization of single monomer units of UDP-N-acetylglucosamine to produce the linear homomer poly-beta-1,6-N-acetyl-D-glucosamine (PNAG, also referred to as PIA), a biofilm adhesin polysaccharide. Requires IcaD for full activity. The chain is Poly-beta-1,6-N-acetyl-D-glucosamine synthase (icaA) from Staphylococcus aureus (strain NCTC 8325 / PS 47).